Reading from the N-terminus, the 35-residue chain is Photosystem II reaction center protein T (35 aa).

Residues 3 to 23 (ALVYTFLLVSTLGIIFFAIFF) form a helical membrane-spanning segment.

The protein belongs to the PsbT family. As to quaternary structure, PSII is composed of 1 copy each of membrane proteins PsbA, PsbB, PsbC, PsbD, PsbE, PsbF, PsbH, PsbI, PsbJ, PsbK, PsbL, PsbM, PsbT, PsbY, PsbZ, Psb30/Ycf12, at least 3 peripheral proteins of the oxygen-evolving complex and a large number of cofactors. It forms dimeric complexes.

The protein localises to the plastid. The protein resides in the chloroplast thylakoid membrane. In terms of biological role, found at the monomer-monomer interface of the photosystem II (PS II) dimer, plays a role in assembly and dimerization of PSII. PSII is a light-driven water plastoquinone oxidoreductase, using light energy to abstract electrons from H(2)O, generating a proton gradient subsequently used for ATP formation. The protein is Photosystem II reaction center protein T of Citrus sinensis (Sweet orange).